The primary structure comprises 782 residues: Phosphoribosylformylglycinamidine synthase subunit PurL (782 aa).

The active site involves His50. Residues Tyr53 and Lys92 each contribute to the ATP site. Residue Glu94 coordinates Mg(2+). Residues Ser95–His98 and Arg117 each bind substrate. His96 serves as the catalytic Proton acceptor. Residue Asp118 coordinates Mg(2+). Position 241 (Gln241) interacts with substrate. Asp269 provides a ligand contact to Mg(2+). Glu313–Gln315 is a substrate binding site. ATP contacts are provided by Asp520 and Gly557. Residue Asn558 coordinates Mg(2+). Ser560 contributes to the substrate binding site.

Belongs to the FGAMS family. As to quaternary structure, monomer. Part of the FGAM synthase complex composed of 1 PurL, 1 PurQ and 2 PurS subunits.

Its subcellular location is the cytoplasm. The catalysed reaction is N(2)-formyl-N(1)-(5-phospho-beta-D-ribosyl)glycinamide + L-glutamine + ATP + H2O = 2-formamido-N(1)-(5-O-phospho-beta-D-ribosyl)acetamidine + L-glutamate + ADP + phosphate + H(+). It functions in the pathway purine metabolism; IMP biosynthesis via de novo pathway; 5-amino-1-(5-phospho-D-ribosyl)imidazole from N(2)-formyl-N(1)-(5-phospho-D-ribosyl)glycinamide: step 1/2. Functionally, part of the phosphoribosylformylglycinamidine synthase complex involved in the purines biosynthetic pathway. Catalyzes the ATP-dependent conversion of formylglycinamide ribonucleotide (FGAR) and glutamine to yield formylglycinamidine ribonucleotide (FGAM) and glutamate. The FGAM synthase complex is composed of three subunits. PurQ produces an ammonia molecule by converting glutamine to glutamate. PurL transfers the ammonia molecule to FGAR to form FGAM in an ATP-dependent manner. PurS interacts with PurQ and PurL and is thought to assist in the transfer of the ammonia molecule from PurQ to PurL. The protein is Phosphoribosylformylglycinamidine synthase subunit PurL of Cyanothece sp. (strain PCC 7425 / ATCC 29141).